A 121-amino-acid chain; its full sequence is UPF0045 protein sll0230 (121 aa).

This sequence belongs to the UPF0045 family.

In Synechocystis sp. (strain ATCC 27184 / PCC 6803 / Kazusa), this protein is UPF0045 protein sll0230.